A 315-amino-acid polypeptide reads, in one-letter code: Voltage-dependent calcium channel gamma-3 subunit (315 aa).

Transmembrane regions (helical) follow at residues isoleucine 8–valine 28, serine 104–alanine 124, isoleucine 135–valine 155, and phenylalanine 181–isoleucine 201. A Phosphoserine modification is found at serine 248.

This sequence belongs to the PMP-22/EMP/MP20 family. CACNG subfamily. In terms of assembly, the L-type calcium channel is composed of five subunits: alpha-1, alpha-2/delta, beta and gamma. Acts as an auxiliary subunit for AMPA-selective glutamate receptors (AMPARs). Found in a complex with GRIA1, GRIA2, GRIA3, GRIA4, CNIH2, CNIH3, CACNG2, CACNG4, CACNG5, CACNG7 and CACNG8. Interacts with AP4M1 and GRIA1; associates GRIA1 with the adaptor protein complex 4 (AP-4) to target GRIA1 to the somatodendritic compartment of neurons.

It is found in the membrane. Regulates the trafficking to the somatodendritic compartment and gating properties of AMPA-selective glutamate receptors (AMPARs). Promotes their targeting to the cell membrane and synapses and modulates their gating properties by slowing their rates of activation, deactivation and desensitization. Does not show subunit-specific AMPA receptor regulation and regulates all AMPAR subunits. Thought to stabilize the calcium channel in an inactivated (closed) state. The protein is Voltage-dependent calcium channel gamma-3 subunit (CACNG3) of Homo sapiens (Human).